The chain runs to 149 residues: Probable flagellum biosynthesis repressor protein FlbT (149 aa).

The protein belongs to the FlbT family.

In terms of biological role, has a post-transcriptional repressor function in flagellum biogenesis. Associates with the 5'-UTR of fljK mRNA and promotes its degradation. This chain is Probable flagellum biosynthesis repressor protein FlbT, found in Agrobacterium fabrum (strain C58 / ATCC 33970) (Agrobacterium tumefaciens (strain C58)).